The sequence spans 3685 residues: Dystrophin (3685 aa).

Positions Met1–Pro240 are actin-binding. Calponin-homology (CH) domains lie at Asp15–Gln119 and Thr134–Pro240. Residues Pro63–His72 form an ANK2- and ANK-3 binding region. Spectrin repeat units follow at residues Val339–Arg447, Val448–Asp556, Leu559–Gln667, Glu719–Tyr828, Asn830–Thr934, Arg943–Glu1045, Asn1048–Gly1154, Glu1157–Glu1263, Ala1266–Gln1367, Ser1368–Lys1463, Glu1468–Lys1568, Lys1571–Glu1676, Lys1679–Ile1778, Pro1779–Glu1874, His1877–Glu1979, Glu1992–Arg2101, Glu2104–Glu2208, Asn2211–Ala2318, Gln2319–Lys2423, Phe2475–Glu2577, Lys2580–Glu2686, Arg2689–Ala2802, Lys2808–Asp2930, and Arg2935–Glu3040. Residue Asn340 is modified to Phosphothreonine. 2 positions are modified to phosphoserine: Tyr344 and Leu348. Phosphothreonine occurs at positions 519, 616, and 629. Positions Ser1415–Lys1913 are interaction with SYNM. Positions Thr3055–Met3088 constitute a WW domain. Residues Gln3058–Thr3408 form an interaction with SYNM region. The ZZ-type; degenerate zinc finger occupies Lys3308 to Thr3364. Zn(2+) contacts are provided by Cys3313, Cys3316, Cys3337, and Cys3340. A binds to SNTB1 region spans residues Asp3466–Arg3518. Phosphoserine occurs at positions 3483, 3490, and 3500. 2 disordered regions span residues Lys3528–Arg3554 and Glu3603–Met3685. Composition is skewed to polar residues over residues Asn3607–Pro3626 and Gln3662–Arg3673. Phosphoserine occurs at positions 3612, 3613, 3617, 3623, 3624, and 3666.

As to quaternary structure, interacts with SYNM. Interacts with the syntrophins SNTA1, SNTB1, SNTB2, SNTG1 and SNTG2. Interacts with KRT19. Component of the dystrophin-associated glycoprotein complex which is composed of three subcomplexes: a cytoplasmic complex comprised of DMD (or UTRN), DTNA and a number of syntrophins, such as SNTB1, SNTB2, SNTG1 and SNTG2, the transmembrane dystroglycan complex, and the sarcoglycan-sarcospan complex. Interacts with DAG1 (betaDAG1) with DMD; the interaction is inhibited by phosphorylation on the PPXY motif of DAG1. Interacts with CMYA5. Directly interacts with ANK2 and ANK3; these interactions do not interfere with betaDAG1-binding and are necessary for proper localization in muscle cells. Identified in a dystroglycan complex that contains at least PRX, DRP2, UTRN, DMD and DAG1. Interacts with DTNB. Interacts with PGM5; the interaction is direct. Interacts with NOS1; localizes NOS1 to sarcolemma in muscle cells. Expressed in muscle fibers accumulating in the costameres of myoplasm at the sarcolemma. Expressed in brain, muscle, kidney, lung and testis. Most tissues contain transcripts of multiple isoforms. Isoform 15: Only isoform to be detected in heart and liver and is also expressed in brain, testis and hepatoma cells.

Its subcellular location is the cell membrane. The protein resides in the sarcolemma. It is found in the cytoplasm. The protein localises to the cytoskeleton. It localises to the postsynaptic cell membrane. Its function is as follows. Anchors the extracellular matrix to the cytoskeleton via F-actin. Ligand for dystroglycan. Component of the dystrophin-associated glycoprotein complex which accumulates at the neuromuscular junction (NMJ) and at a variety of synapses in the peripheral and central nervous systems and has a structural function in stabilizing the sarcolemma. Also implicated in signaling events and synaptic transmission. The chain is Dystrophin from Homo sapiens (Human).